The chain runs to 160 residues: Phosphopantetheine adenylyltransferase (160 aa).

A substrate-binding site is contributed by S9. ATP-binding positions include 9-10 (SF) and H17. Substrate is bound by residues K41, T73, and R87. ATP-binding positions include 88–90 (GMR), E98, and 123–129 (YTFFSSS).

This sequence belongs to the bacterial CoaD family. In terms of assembly, homohexamer. Mg(2+) is required as a cofactor.

The protein localises to the cytoplasm. The catalysed reaction is (R)-4'-phosphopantetheine + ATP + H(+) = 3'-dephospho-CoA + diphosphate. The protein operates within cofactor biosynthesis; coenzyme A biosynthesis; CoA from (R)-pantothenate: step 4/5. In terms of biological role, reversibly transfers an adenylyl group from ATP to 4'-phosphopantetheine, yielding dephospho-CoA (dPCoA) and pyrophosphate. This Roseiflexus castenholzii (strain DSM 13941 / HLO8) protein is Phosphopantetheine adenylyltransferase.